A 289-amino-acid chain; its full sequence is Bidirectional sugar transporter SWEET15 (289 aa).

Residues 1-10 (MAMAMANHHT) lie on the Extracellular side of the membrane. The helical transmembrane segment at 11 to 31 (LGLIFGILGNIISFLVYFAPA) threads the bilayer. Residues 14-100 (IFGILGNIIS…LYFFYAPMQA (87 aa)) form the MtN3/slv 1 domain. Residues 32–45 (PTFYRIYKRKSAEG) lie on the Cytoplasmic side of the membrane. A helical membrane pass occupies residues 46–66 (FHSLPYIVALFSAMLWLYYAL). Topologically, residues 67–70 (LKKD) are extracellular. Residues 71-91 (AFLLITINSFGCAIESFYILL) form a helical membrane-spanning segment. Topologically, residues 92–106 (YFFYAPMQAKKQTLK) are cytoplasmic. A helical membrane pass occupies residues 107–127 (VVISLNVGVFSILVVLIQFLL). The Extracellular portion of the chain corresponds to 128-134 (KGSNRIN). The chain crosses the membrane as a helical span at residues 135 to 155 (VFGWICASFSVAVFAAPLSIV). In terms of domain architecture, MtN3/slv 2 spans 136 to 219 (FGWICASFSV…VLYGFYRNAG (84 aa)). Over 156–167 (AKVIRTKSVEFM) the chain is Cytoplasmic. A helical membrane pass occupies residues 168-188 (PFSLSFFLTLSAIMWFAYGLL). The Extracellular portion of the chain corresponds to 189-193 (KNDPC). A helical transmembrane segment spans residues 194-214 (VAIPNILGVILGLVQMVLYGF). The Cytoplasmic segment spans residues 215 to 289 (YRNAGKEKME…GELQPNGSTV (75 aa)). A disordered region spans residues 249–289 (GAQQNGIKKSGSEDVKDDEETGNREKSTENSGELQPNGSTV). A compositionally biased stretch (polar residues) spans 277-289 (ENSGELQPNGSTV).

Belongs to the SWEET sugar transporter family. As to quaternary structure, forms homooligomers and/or heterooligomers.

The protein resides in the cell membrane. Mediates both low-affinity uptake and efflux of sugar across the plasma membrane. This Vitis vinifera (Grape) protein is Bidirectional sugar transporter SWEET15.